The primary structure comprises 139 residues: uncharacterized protein (139 aa).

Positions 1–32 (MEFHDDKKNELQKKEEIITEAIDTLFQSSAFG) are cleaved as a signal peptide. In terms of domain architecture, sHSP spans 44–139 (SSLKDVQTTI…TLFFPKNKHE (96 aa)).

Belongs to the small heat shock protein (HSP20) family.

This is an uncharacterized protein from Bacillus subtilis (strain 168).